Here is an 89-residue protein sequence, read N- to C-terminus: Small ribosomal subunit protein uS17 (89 aa).

It belongs to the universal ribosomal protein uS17 family. Part of the 30S ribosomal subunit.

One of the primary rRNA binding proteins, it binds specifically to the 5'-end of 16S ribosomal RNA. The protein is Small ribosomal subunit protein uS17 of Polaromonas naphthalenivorans (strain CJ2).